Here is an 82-residue protein sequence, read N- to C-terminus: Alpha-defensin 17 (82 aa).

Residues 1-8 (LLAFQVQA) form the signal peptide. Residues 1 to 43 (LLAFQVQADPIQNTDEETKTEEQPGEEDQAVSVSFGDPEGTSL) are disordered. Positions 9–47 (DPIQNTDEETKTEEQPGEEDQAVSVSFGDPEGTSLQEES) are excised as a propeptide. Cystine bridges form between Cys53/Cys81, Cys55/Cys70, and Cys60/Cys80.

It belongs to the alpha-defensin family.

Its subcellular location is the secreted. Probably contributes to the antimicrobial barrier function of the small bowel mucosa. This chain is Alpha-defensin 17 (Defa17), found in Mus musculus (Mouse).